A 126-amino-acid polypeptide reads, in one-letter code: Fluoride-specific ion channel FluC (126 aa).

The next 4 membrane-spanning stretches (helical) occupy residues serine 4–leucine 24, glycine 36–alanine 56, leucine 68–valine 88, and alanine 99–alanine 119. Glycine 75 and threonine 78 together coordinate Na(+).

This sequence belongs to the fluoride channel Fluc/FEX (TC 1.A.43) family.

The protein localises to the cell inner membrane. It catalyses the reaction fluoride(in) = fluoride(out). Its activity is regulated as follows. Na(+) is not transported, but it plays an essential structural role and its presence is essential for fluoride channel function. In terms of biological role, fluoride-specific ion channel. Important for reducing fluoride concentration in the cell, thus reducing its toxicity. This Chromobacterium violaceum (strain ATCC 12472 / DSM 30191 / JCM 1249 / CCUG 213 / NBRC 12614 / NCIMB 9131 / NCTC 9757 / MK) protein is Fluoride-specific ion channel FluC.